Consider the following 364-residue polypeptide: UDP-N-acetylglucosamine--N-acetylmuramyl-(pentapeptide) pyrophosphoryl-undecaprenol N-acetylglucosamine transferase (364 aa).

Residues 10 to 12 (TGG), Asn123, Ser198, Ile251, and Gln296 contribute to the UDP-N-acetyl-alpha-D-glucosamine site.

The protein belongs to the glycosyltransferase 28 family. MurG subfamily.

The protein localises to the cell membrane. It catalyses the reaction di-trans,octa-cis-undecaprenyl diphospho-N-acetyl-alpha-D-muramoyl-L-alanyl-D-glutamyl-meso-2,6-diaminopimeloyl-D-alanyl-D-alanine + UDP-N-acetyl-alpha-D-glucosamine = di-trans,octa-cis-undecaprenyl diphospho-[N-acetyl-alpha-D-glucosaminyl-(1-&gt;4)]-N-acetyl-alpha-D-muramoyl-L-alanyl-D-glutamyl-meso-2,6-diaminopimeloyl-D-alanyl-D-alanine + UDP + H(+). Its pathway is cell wall biogenesis; peptidoglycan biosynthesis. Cell wall formation. Catalyzes the transfer of a GlcNAc subunit on undecaprenyl-pyrophosphoryl-MurNAc-pentapeptide (lipid intermediate I) to form undecaprenyl-pyrophosphoryl-MurNAc-(pentapeptide)GlcNAc (lipid intermediate II). The sequence is that of UDP-N-acetylglucosamine--N-acetylmuramyl-(pentapeptide) pyrophosphoryl-undecaprenol N-acetylglucosamine transferase from Exiguobacterium sibiricum (strain DSM 17290 / CCUG 55495 / CIP 109462 / JCM 13490 / 255-15).